Consider the following 946-residue polypeptide: Inter-alpha-trypsin inhibitor heavy chain H2 (946 aa).

The signal sequence occupies residues M1–A18. A propeptide spanning residues F19 to R54 is cleaved from the precursor. Residues L56 to E185 enclose the VIT domain. S60 carries the phosphoserine modification. N-linked (GlcNAc...) asparagine glycans are attached at residues N118 and N263. Residues E282 and E283 each carry the 4-carboxyglutamate modification. The VWFA domain maps to P308–E468. N445 carries N-linked (GlcNAc...) asparagine glycosylation. S466 bears the Phosphoserine mark. Aspartate 1-(chondroitin 4-sulfate)-ester is present on D702. Positions P703–P946 are excised as a propeptide. At S886 the chain carries Phosphoserine.

This sequence belongs to the ITIH family. I-alpha-I plasma protease inhibitors are assembled from one or two heavy chains (HC) and one light chain, bikunin. Inter-alpha-inhibitor (I-alpha-I) is composed of ITIH1/HC1, ITIH2/HC2 and bikunin. Heavy chains are linked to bikunin via chondroitin 4-sulfate esterified to the alpha-carboxyl of the C-terminal aspartate after propeptide cleavage. In terms of processing, phosphorylated by FAM20C in the extracellular medium. Expressed in both liver and brain.

The protein resides in the secreted. Its function is as follows. May act as a carrier of hyaluronan in serum or as a binding protein between hyaluronan and other matrix protein, including those on cell surfaces in tissues to regulate the localization, synthesis and degradation of hyaluronan which are essential to cells undergoing biological processes. This Mus musculus (Mouse) protein is Inter-alpha-trypsin inhibitor heavy chain H2 (Itih2).